We begin with the raw amino-acid sequence, 455 residues long: Venom prothrombin activator nigrarin-D (455 aa).

Positions 1-20 (MAPPLLLCLILTFLWNLPEA) are cleaved as a signal peptide. A propeptide spanning residues 21–40 (ESNVFLKSKVANRFLQRTKR) is cleaved from the precursor. The region spanning 41–86 (SNSIFEEFKAGNIERECIEEKCSKEEAREVFEDNEKTETFWNVYVD) is the Gla domain. Glu46, Glu47, Glu54, Glu56, Glu59, Glu60, Glu65, Glu66, Glu69, Glu72, and Glu75 each carry 4-carboxyglutamate. Cys57 and Cys62 are oxidised to a cystine. In terms of domain architecture, EGF-like 1; calcium-binding spans 86–122 (DGDQCSSNPCHYRGTCKDGIGSYTCTCLPNYEGKNCE). Cystine bridges form between Cys90/Cys101, Cys95/Cys110, Cys112/Cys121, Cys129/Cys140, Cys136/Cys149, Cys151/Cys164, Cys172/Cys328, Cys216/Cys221, Cys236/Cys252, Cys376/Cys390, and Cys401/Cys429. O-linked (Hex...) serine glycosylation occurs at Ser92. Positions 129 to 164 (CRVFNGNCWHFCKSVQNEIQCSCAESYRLGDDGHSC) constitute an EGF-like 2 domain. Residues 182-209 (REASLPDFVQSQKAILLKKSDNPSPDIR) constitute a propeptide, activation peptide. In terms of domain architecture, Peptidase S1 spans 210 to 453 (IINGMDCKLG…FIPWIKAIMS (244 aa)). His251 (charge relay system) is an active-site residue. Asn254 is a glycosylation site (N-linked (GlcNAc...) asparagine). Residue Asp308 is the Charge relay system of the active site. Ser405 (charge relay system) is an active-site residue.

The protein belongs to the peptidase S1 family. Snake venom subfamily. As to quaternary structure, heterodimer of a light chain and a heavy chain; disulfide-linked. Post-translationally, the vitamin K-dependent, enzymatic carboxylation of some glutamate residues allows the modified protein to bind calcium. In terms of tissue distribution, expressed by the venom gland.

It localises to the secreted. It carries out the reaction Selective cleavage of Arg-|-Thr and then Arg-|-Ile bonds in prothrombin to form thrombin.. Functionally, snake prothrombin activator that attacks the hemostatic system of prey. This protein is functionally similar to blood coagulation factor Xa. The sequence is that of Venom prothrombin activator nigrarin-D from Cryptophis nigrescens (Eastern small-eyed snake).